A 127-amino-acid chain; its full sequence is Mini-ribonuclease 3-like protein (127 aa).

Aspartate 19 is an active-site residue.

This sequence belongs to the MrnC RNase family.

In terms of biological role, might be a ribonuclease involved in RNA processing. The sequence is that of Mini-ribonuclease 3-like protein (mrnCL) from Ilyobacter polytropus (strain ATCC 51220 / DSM 2926 / LMG 16218 / CuHBu1).